The primary structure comprises 51 residues: Large ribosomal subunit protein eL39 (51 aa).

The protein belongs to the eukaryotic ribosomal protein eL39 family.

This Picrophilus torridus (strain ATCC 700027 / DSM 9790 / JCM 10055 / NBRC 100828 / KAW 2/3) protein is Large ribosomal subunit protein eL39.